The sequence spans 397 residues: MNVLVINCGSSSLKYQLINSDSEEVLAKGLCERIGIDGRLVYQKEGLDKEITEAPMPTHKEAIQMVLDALVNPKTGAVKSLAEIDAVGHRVVHGGEKFSDSVVITEEVIAQVEECNDLAPLHNPANIIGIRACQALMPNVPMVGVFDTAFHQTMPEKAYLYGLPYEYYEKYKVRRYGFHGTSHSFVSKEAASYLGMDLNNSKIIVAHLGNGASVSAVLNGKCVDTSMGLTPLEGLVMGTRSGDIDPSIMEFIAKKENLDIDGVMNVLNKKSGVAGMSGVSSDFRDLEAAYNEGNERAIAAVEVFSYRVAKYIGAYAAAMNGVDAIAFTAGIGENTSFVREKIMAYLGYLGIKIDRVTNDKTRGVEALISTADSSVKVCVIPTNEELAICRETVKLVG.

Asn-7 contacts Mg(2+). Position 14 (Lys-14) interacts with ATP. Substrate is bound at residue Arg-90. Residue Asp-147 is the Proton donor/acceptor of the active site. ATP is bound by residues 207–211 (HLGNG), 282–284 (DFR), and 330–334 (GIGEN). A Mg(2+)-binding site is contributed by Glu-384.

It belongs to the acetokinase family. In terms of assembly, homodimer. The cofactor is Mg(2+). Mn(2+) is required as a cofactor.

It is found in the cytoplasm. The enzyme catalyses acetate + ATP = acetyl phosphate + ADP. It functions in the pathway metabolic intermediate biosynthesis; acetyl-CoA biosynthesis; acetyl-CoA from acetate: step 1/2. Functionally, catalyzes the formation of acetyl phosphate from acetate and ATP. Can also catalyze the reverse reaction. The protein is Acetate kinase of Agathobacter rectalis (strain ATCC 33656 / DSM 3377 / JCM 17463 / KCTC 5835 / VPI 0990) (Eubacterium rectale).